A 309-amino-acid chain; its full sequence is Aspartate carbamoyltransferase catalytic subunit (309 aa).

The carbamoyl phosphate site is built by R58 and T59. An L-aspartate-binding site is contributed by K86. Carbamoyl phosphate contacts are provided by R108, H136, and Q139. R169 and R223 together coordinate L-aspartate. G265 and P266 together coordinate carbamoyl phosphate.

The protein belongs to the aspartate/ornithine carbamoyltransferase superfamily. ATCase family. Heterododecamer (2C3:3R2) of six catalytic PyrB chains organized as two trimers (C3), and six regulatory PyrI chains organized as three dimers (R2).

The catalysed reaction is carbamoyl phosphate + L-aspartate = N-carbamoyl-L-aspartate + phosphate + H(+). It participates in pyrimidine metabolism; UMP biosynthesis via de novo pathway; (S)-dihydroorotate from bicarbonate: step 2/3. Catalyzes the condensation of carbamoyl phosphate and aspartate to form carbamoyl aspartate and inorganic phosphate, the committed step in the de novo pyrimidine nucleotide biosynthesis pathway. This is Aspartate carbamoyltransferase catalytic subunit from Akkermansia muciniphila (strain ATCC BAA-835 / DSM 22959 / JCM 33894 / BCRC 81048 / CCUG 64013 / CIP 107961 / Muc).